The following is a 393-amino-acid chain: 4-hydroxyphenylpyruvate dioxygenase (393 aa).

2 consecutive VOC domains span residues 17–148 and 179–339; these read AFDH…LLER and FLDH…IFSK. Positions 182, 267, and 350 each coordinate Fe cation.

It belongs to the 4HPPD family. It depends on Fe cation as a cofactor.

The enzyme catalyses 3-(4-hydroxyphenyl)pyruvate + O2 = homogentisate + CO2. Its pathway is amino-acid degradation; L-phenylalanine degradation; acetoacetate and fumarate from L-phenylalanine: step 3/6. Its function is as follows. Key enzyme in the degradation of tyrosine. The sequence is that of 4-hydroxyphenylpyruvate dioxygenase (hpd-1) from Caenorhabditis briggsae.